Consider the following 202-residue polypeptide: Flagellar transcriptional regulator FlhC (202 aa).

4 residues coordinate Zn(2+): C137, C140, C157, and C160.

This sequence belongs to the FlhC family. As to quaternary structure, heterohexamer composed of two FlhC and four FlhD subunits. Each FlhC binds a FlhD dimer, forming a heterotrimer, and a hexamer assembles by dimerization of two heterotrimers. Zn(2+) is required as a cofactor.

It localises to the cytoplasm. Functionally, functions in complex with FlhD as a master transcriptional regulator that regulates transcription of several flagellar and non-flagellar operons by binding to their promoter region. Activates expression of class 2 flagellar genes, including fliA, which is a flagellum-specific sigma factor that turns on the class 3 genes. Also regulates genes whose products function in a variety of physiological pathways. The protein is Flagellar transcriptional regulator FlhC of Variovorax paradoxus (strain S110).